The sequence spans 268 residues: MSRLQTRFAQLKQENRAALVTFVTAGDPDYASSLEILKGLPAAGADVIELGMPFTDPMADGPAIQLANIRALDGGQTLARTLQMVREFRSGESETPLVLMGYFNPIHHYGVERFIAEAKEVGVDGLIVVDLPPEHNEDLCHPAQAAGLDFIRLTTPTTGDQRLPTVLEGSSGFVYYVSVAGVTGANAATLEHVEEAVARLRRHTDLPIGIGFGIRSAEHAAAVARLADGVVVGSALIDRIAKARDNAQAVKDVLALCGELAEGVRNAR.

Residues E49 and D60 each act as proton acceptor in the active site.

This sequence belongs to the TrpA family. In terms of assembly, tetramer of two alpha and two beta chains.

The catalysed reaction is (1S,2R)-1-C-(indol-3-yl)glycerol 3-phosphate + L-serine = D-glyceraldehyde 3-phosphate + L-tryptophan + H2O. The protein operates within amino-acid biosynthesis; L-tryptophan biosynthesis; L-tryptophan from chorismate: step 5/5. Functionally, the alpha subunit is responsible for the aldol cleavage of indoleglycerol phosphate to indole and glyceraldehyde 3-phosphate. This is Tryptophan synthase alpha chain from Pseudomonas aeruginosa (strain LESB58).